The primary structure comprises 115 residues: Toxin CSTX-9 (115 aa).

A signal peptide spans 1 to 20; that stretch reads MKVLVICAVLFLAIFSNSSA. Positions 21 to 47 are excised as a propeptide; that stretch reads ETEDDFLEDESFEADDVIPFLAREQVR. 4 disulfides stabilise this stretch: cysteine 53–cysteine 68, cysteine 60–cysteine 77, cysteine 67–cysteine 95, and cysteine 79–cysteine 93.

This sequence belongs to the neurotoxin 19 (CSTX) family. As to quaternary structure, monomer. Interacts with CSTX-13 (AC P83919) (Kd=370 nM), but does not interact with CSTX-1 (AC P81694). As to expression, expressed by the venom gland.

Its subcellular location is the secreted. It localises to the target cell membrane. Its function is as follows. Synergistic toxin that induces or increases a cytolytic effect when combined with CSTX-1 (AC P81694) or CSTX-13 (AC P83919). Potassium ions and M-ctenitoxin-Cs1a (AC P83619) have also an effect on its activity. When alone, has no insecticidal activity. This is Toxin CSTX-9 from Cupiennius salei (American wandering spider).